The following is a 96-amino-acid chain: uncharacterized protein (96 aa).

The N-terminal stretch at 1-15 (MRLFILLVALFVICA) is a signal peptide.

This is an uncharacterized protein from Caenorhabditis elegans.